The chain runs to 326 residues: Homocysteine S-methyltransferase 1 (326 aa).

Positions 9-323 (LLEDLIKKCG…STINAISRDL (315 aa)) constitute a Hcy-binding domain. Zn(2+) is bound by residues Cys-241, Cys-308, and Cys-309.

As to quaternary structure, monomer. The cofactor is Zn(2+). In terms of tissue distribution, expressed predominantly in roots. Expressed in rosette leaves, cauline leaves and developing seeds.

The enzyme catalyses S-methyl-L-methionine + L-homocysteine = 2 L-methionine + H(+). Strongly inhibited by methionine. Catalyzes methyl transfer from S-methylmethionine (SMM) to adenosyl-L-homocysteine (AdoMet). SMM degradation (by HMT-1, HMT-2 and HMT-3) and biosynthesis (by MMT1) constitute the SMM cycle in plants, which is probably required to achieve short term control of AdoMet level. This chain is Homocysteine S-methyltransferase 1 (HMT-1), found in Arabidopsis thaliana (Mouse-ear cress).